The primary structure comprises 604 residues: Sulfite reductase [NADPH] flavoprotein alpha-component (604 aa).

The Flavodoxin-like domain occupies 65–203 (VTILYGSQTG…AAGQWHADVL (139 aa)). Residues 71–76 (SQTGNG), 118–121 (STHG), and 154–163 (LGDSSYEFFC) each bind FMN. An FAD-binding FR-type domain is found at 236–453 (QNPYSAEVLV…VEPNKHFRLP (218 aa)). Residues threonine 324, leucine 358, 392 to 395 (RLYS), 410 to 412 (TVA), and 425 to 428 (GGAS) contribute to the FAD site. NADP(+) is bound by residues 524–525 (SR), 530–534 (KIYVQ), and aspartate 566. Tyrosine 604 lines the FAD pocket.

Belongs to the NADPH-dependent sulphite reductase flavoprotein subunit CysJ family. It in the N-terminal section; belongs to the flavodoxin family. This sequence in the C-terminal section; belongs to the flavoprotein pyridine nucleotide cytochrome reductase family. In terms of assembly, alpha(8)-beta(8). The alpha component is a flavoprotein, the beta component is a hemoprotein. FAD serves as cofactor. Requires FMN as cofactor.

The enzyme catalyses hydrogen sulfide + 3 NADP(+) + 3 H2O = sulfite + 3 NADPH + 4 H(+). The protein operates within sulfur metabolism; hydrogen sulfide biosynthesis; hydrogen sulfide from sulfite (NADPH route): step 1/1. In terms of biological role, component of the sulfite reductase complex that catalyzes the 6-electron reduction of sulfite to sulfide. This is one of several activities required for the biosynthesis of L-cysteine from sulfate. The flavoprotein component catalyzes the electron flow from NADPH -&gt; FAD -&gt; FMN to the hemoprotein component. The chain is Sulfite reductase [NADPH] flavoprotein alpha-component from Shewanella sp. (strain MR-4).